The following is a 156-amino-acid chain: Snaclec A12 (156 aa).

The first 23 residues, 1-23, serve as a signal peptide directing secretion; sequence MGRSISVSFGLLVVFLSLSGTGA. 3 disulfide bridges follow: cysteine 27-cysteine 38, cysteine 55-cysteine 148, and cysteine 123-cysteine 140. The C-type lectin domain maps to 34-149; it reads YEGHCYKVFN…CELAYHFICM (116 aa).

This sequence belongs to the snaclec family. Heterodimer; disulfide-linked. As to expression, expressed by the venom gland.

The protein resides in the secreted. Functionally, interferes with one step of hemostasis (modulation of platelet aggregation, or coagulation cascade, for example). This is Snaclec A12 from Macrovipera lebetinus (Levantine viper).